A 509-amino-acid polypeptide reads, in one-letter code: Maturase K (509 aa).

The protein belongs to the intron maturase 2 family. MatK subfamily.

It localises to the plastid. The protein localises to the chloroplast. Functionally, usually encoded in the trnK tRNA gene intron. Probably assists in splicing its own and other chloroplast group II introns. In Drimys granadensis, this protein is Maturase K.